Reading from the N-terminus, the 307-residue chain is Aspartate carbamoyltransferase catalytic subunit (307 aa).

Carbamoyl phosphate-binding residues include R54 and T55. K83 contacts L-aspartate. Residues R104, H132, and Q135 each coordinate carbamoyl phosphate. Residues R165 and R228 each contribute to the L-aspartate site. Residues L267 and P268 each contribute to the carbamoyl phosphate site.

This sequence belongs to the aspartate/ornithine carbamoyltransferase superfamily. ATCase family. In terms of assembly, heterododecamer (2C3:3R2) of six catalytic PyrB chains organized as two trimers (C3), and six regulatory PyrI chains organized as three dimers (R2).

The catalysed reaction is carbamoyl phosphate + L-aspartate = N-carbamoyl-L-aspartate + phosphate + H(+). It participates in pyrimidine metabolism; UMP biosynthesis via de novo pathway; (S)-dihydroorotate from bicarbonate: step 2/3. Its function is as follows. Catalyzes the condensation of carbamoyl phosphate and aspartate to form carbamoyl aspartate and inorganic phosphate, the committed step in the de novo pyrimidine nucleotide biosynthesis pathway. This Clostridium botulinum (strain Loch Maree / Type A3) protein is Aspartate carbamoyltransferase catalytic subunit.